A 660-amino-acid polypeptide reads, in one-letter code: Kinesin-like protein KIF22 (660 aa).

A disordered region spans residues 1–31; that stretch reads MSLRAKTCPQRREMASATSGPGRCVSKGGLG. One can recognise a Kinesin motor domain in the interval 38-363; sequence RVRVAVRLRP…LNFTARSKEV (326 aa). Position 122 to 129 (122 to 129) interacts with ATP; it reads GPTGAGKT. A disordered region spans residues 391–418; it reads PSEAKKAKGPEEESTGSPESTAAPASAS. The span at 405–418 shows a compositional bias: low complexity; that stretch reads TGSPESTAAPASAS. Phosphoserine is present on residues serine 407, serine 422, and serine 447. Lysine 460 is covalently cross-linked (Glycyl lysine isopeptide (Lys-Gly) (interchain with G-Cter in SUMO2)). Residues 460-505 are a coiled coil; it reads KRERMVLMKTVEEKNLEIERLKMKQKELEAKVLAQEAPDPREKENT. 2 disordered regions span residues 493 to 516 and 534 to 567; these read AQEAPDPREKENTPTILQPPASYS and IQKQRESSNQIQLLKKGPKRKLEPSPESEAVEKD. A compositionally biased stretch (polar residues) spans 505-516; the sequence is TPTILQPPASYS. Phosphoserine is present on residues serine 540 and serine 576.

The protein belongs to the TRAFAC class myosin-kinesin ATPase superfamily. Kinesin family. As to quaternary structure, interacts with FAM83D and SIAH1. Ubiquitinated; mediated by SIAH1 and leading to its subsequent proteasomal degradation.

The protein localises to the nucleus. It localises to the cytoplasm. The protein resides in the cytoskeleton. In terms of biological role, kinesin family member that is involved in spindle formation and the movements of chromosomes during mitosis and meiosis. Binds to microtubules and to DNA. Plays a role in congression of laterally attached chromosomes in NDC80-depleted cells. The polypeptide is Kinesin-like protein KIF22 (Kif22) (Mus musculus (Mouse)).